A 92-amino-acid chain; its full sequence is Small ribosomal subunit protein uS19 (92 aa).

This sequence belongs to the universal ribosomal protein uS19 family.

Functionally, protein S19 forms a complex with S13 that binds strongly to the 16S ribosomal RNA. This is Small ribosomal subunit protein uS19 from Rhizobium rhizogenes (strain K84 / ATCC BAA-868) (Agrobacterium radiobacter).